A 426-amino-acid chain; its full sequence is Serine hydroxymethyltransferase (426 aa).

Residues leucine 113 and 117–119 (GHL) each bind (6S)-5,6,7,8-tetrahydrofolate. N6-(pyridoxal phosphate)lysine is present on lysine 222. Residue 363–365 (SPF) participates in (6S)-5,6,7,8-tetrahydrofolate binding.

The protein belongs to the SHMT family. In terms of assembly, homodimer. Pyridoxal 5'-phosphate serves as cofactor.

It localises to the cytoplasm. It catalyses the reaction (6R)-5,10-methylene-5,6,7,8-tetrahydrofolate + glycine + H2O = (6S)-5,6,7,8-tetrahydrofolate + L-serine. It functions in the pathway one-carbon metabolism; tetrahydrofolate interconversion. Its pathway is amino-acid biosynthesis; glycine biosynthesis; glycine from L-serine: step 1/1. In terms of biological role, catalyzes the reversible interconversion of serine and glycine with tetrahydrofolate (THF) serving as the one-carbon carrier. This reaction serves as the major source of one-carbon groups required for the biosynthesis of purines, thymidylate, methionine, and other important biomolecules. Also exhibits THF-independent aldolase activity toward beta-hydroxyamino acids, producing glycine and aldehydes, via a retro-aldol mechanism. The chain is Serine hydroxymethyltransferase from Azobacteroides pseudotrichonymphae genomovar. CFP2.